The primary structure comprises 514 residues: Cytochrome P450 monooxygenase aneD (514 aa).

The chain crosses the membrane as a helical span at residues 6-26 (ICTLLAVIATTSLGLLFLSII). Residues Asn113, Asn261, and Asn347 are each glycosylated (N-linked (GlcNAc...) asparagine). Cys424 contributes to the heme binding site.

This sequence belongs to the cytochrome P450 family. Requires heme as cofactor.

Its subcellular location is the membrane. It catalyses the reaction asperaculane D + reduced [NADPH--hemoprotein reductase] + O2 = asperaculane E + oxidized [NADPH--hemoprotein reductase] + H2O + H(+). Its pathway is secondary metabolite biosynthesis. Cytochrome P450 monooxygenase; part of the gene cluster that mediates the biosynthesis of aculenes, a unique type of norsesquiterpenes that contain a nordaucane skeleton linked to an L-proline moiety and are of mixed biosynthetic origin. The pathway begins with the synthesis of dauca-4,7-diene by the terpene cyclase aneC using farnesyl pyrophosphate (FPP) as substrate. The cytochrome P450 monooxygenase aneF then performs the initial oxidation at C-12 of dauca-4,7-diene to yield asperaculane D. Asperaculane D is substrate of the cytochrome P450 monooxygenase aneD for C-10 hydroxylation to yield asperaculane E. The cytochrome P450 monooxygenase aneG then converts asperaculane E into aculene D via C-2 oxidation. The monomodular nonribosomal peptide synthtase aneB adenylates L-proline and the thiohydrolase aneE transfers this activated L-proline derivative to aculenes D and C to produce respectively aculenes B and A. The dioxygenase aneA converts aculene D into aculene C, and aculene B into aculene A by introducing the 5,6-alkene moiety. Asperculanes A, B, C and F, as well as 14-prolyl asperculane C, might be shunt products of the pathway. The polypeptide is Cytochrome P450 monooxygenase aneD (Aspergillus aculeatus (strain ATCC 16872 / CBS 172.66 / WB 5094)).